Here is a 439-residue protein sequence, read N- to C-terminus: 3-phosphoshikimate 1-carboxyvinyltransferase (439 aa).

3 residues coordinate 3-phosphoshikimate: Lys29, Ser30, and Arg34. Lys29 contributes to the phosphoenolpyruvate binding site. Phosphoenolpyruvate-binding residues include Gly100 and Arg128. Residues Ser173, Ser174, Gln175, Ser201, Asp321, and Lys348 each coordinate 3-phosphoshikimate. Phosphoenolpyruvate is bound at residue Gln175. Residue Asp321 is the Proton acceptor of the active site. 2 residues coordinate phosphoenolpyruvate: Arg352 and Arg395.

This sequence belongs to the EPSP synthase family. As to quaternary structure, monomer.

The protein resides in the cytoplasm. The catalysed reaction is 3-phosphoshikimate + phosphoenolpyruvate = 5-O-(1-carboxyvinyl)-3-phosphoshikimate + phosphate. The protein operates within metabolic intermediate biosynthesis; chorismate biosynthesis. In terms of biological role, catalyzes the transfer of the enolpyruvyl moiety of phosphoenolpyruvate (PEP) to the 5-hydroxyl of shikimate-3-phosphate (S3P) to produce enolpyruvyl shikimate-3-phosphate and inorganic phosphate. The polypeptide is 3-phosphoshikimate 1-carboxyvinyltransferase (Halobacterium salinarum (strain ATCC 700922 / JCM 11081 / NRC-1) (Halobacterium halobium)).